The following is a 76-amino-acid chain: Cytochrome c oxidase subunit 6C (76 aa).

Over 4-22 the chain is Mitochondrial matrix; the sequence is GALLPKPQMRGLLAKRLRV. Residues 23 to 44 traverse the membrane as a helical segment; the sequence is HIAGAFIVALGVAAAYKFGVAE. At 45 to 76 the chain is on the mitochondrial intermembrane side; that stretch reads PRKKAYAEFYRNYDSMKDFEEMRKAGIFQSAK.

This sequence belongs to the cytochrome c oxidase subunit 6c family. Component of the cytochrome c oxidase (complex IV, CIV), a multisubunit enzyme composed of 14 subunits. The complex is composed of a catalytic core of 3 subunits MT-CO1, MT-CO2 and MT-CO3, encoded in the mitochondrial DNA, and 11 supernumerary subunits COX4I, COX5A, COX5B, COX6A, COX6B, COX6C, COX7A, COX7B, COX7C, COX8 and NDUFA4, which are encoded in the nuclear genome. The complex exists as a monomer or a dimer and forms supercomplexes (SCs) in the inner mitochondrial membrane with NADH-ubiquinone oxidoreductase (complex I, CI) and ubiquinol-cytochrome c oxidoreductase (cytochrome b-c1 complex, complex III, CIII), resulting in different assemblies (supercomplex SCI(1)III(2)IV(1) and megacomplex MCI(2)III(2)IV(2)). In terms of processing, acetylation of Lys-61 is observed in liver mitochondria from fasted mice but not from fed mice.

The protein resides in the mitochondrion inner membrane. Its pathway is energy metabolism; oxidative phosphorylation. Functionally, component of the cytochrome c oxidase, the last enzyme in the mitochondrial electron transport chain which drives oxidative phosphorylation. The respiratory chain contains 3 multisubunit complexes succinate dehydrogenase (complex II, CII), ubiquinol-cytochrome c oxidoreductase (cytochrome b-c1 complex, complex III, CIII) and cytochrome c oxidase (complex IV, CIV), that cooperate to transfer electrons derived from NADH and succinate to molecular oxygen, creating an electrochemical gradient over the inner membrane that drives transmembrane transport and the ATP synthase. Cytochrome c oxidase is the component of the respiratory chain that catalyzes the reduction of oxygen to water. Electrons originating from reduced cytochrome c in the intermembrane space (IMS) are transferred via the dinuclear copper A center (CU(A)) of subunit 2 and heme A of subunit 1 to the active site in subunit 1, a binuclear center (BNC) formed by heme A3 and copper B (CU(B)). The BNC reduces molecular oxygen to 2 water molecules using 4 electrons from cytochrome c in the IMS and 4 protons from the mitochondrial matrix. This is Cytochrome c oxidase subunit 6C (Cox6c) from Mus musculus (Mouse).